A 127-amino-acid polypeptide reads, in one-letter code: Large ribosomal subunit protein eL32B (127 aa).

The protein belongs to the eukaryotic ribosomal protein eL32 family. Component of the large ribosomal subunit (LSU). Mature yeast ribosomes consist of a small (40S) and a large (60S) subunit. The 40S small subunit contains 1 molecule of ribosomal RNA (18S rRNA) and at least 33 different proteins. The large 60S subunit contains 3 rRNA molecules (25S, 5.8S and 5S rRNA) and at least 46 different proteins.

It localises to the cytoplasm. The protein resides in the nucleus. Its subcellular location is the nucleolus. Component of the ribosome, a large ribonucleoprotein complex responsible for the synthesis of proteins in the cell. The small ribosomal subunit (SSU) binds messenger RNAs (mRNAs) and translates the encoded message by selecting cognate aminoacyl-transfer RNA (tRNA) molecules. The large subunit (LSU) contains the ribosomal catalytic site termed the peptidyl transferase center (PTC), which catalyzes the formation of peptide bonds, thereby polymerizing the amino acids delivered by tRNAs into a polypeptide chain. The nascent polypeptides leave the ribosome through a tunnel in the LSU and interact with protein factors that function in enzymatic processing, targeting, and the membrane insertion of nascent chains at the exit of the ribosomal tunnel. The protein is Large ribosomal subunit protein eL32B (rpl3201) of Schizosaccharomyces pombe (strain 972 / ATCC 24843) (Fission yeast).